The following is a 338-amino-acid chain: Peroxidase 15 (338 aa).

The signal sequence occupies residues 1–22 (MARIGSFLIILYLIYALTLCIC). Disulfide bonds link cysteine 45/cysteine 125, cysteine 78/cysteine 83, cysteine 131/cysteine 332, and cysteine 210/cysteine 242. The active-site Proton acceptor is the histidine 76. Positions 77, 80, 82, 84, and 86 each coordinate Ca(2+). Proline 173 contributes to the substrate binding site. N-linked (GlcNAc...) asparagine glycosylation occurs at asparagine 176. Histidine 203 contributes to the heme b binding site. Threonine 204 lines the Ca(2+) pocket. Residues asparagine 219 and asparagine 250 are each glycosylated (N-linked (GlcNAc...) asparagine). Ca(2+)-binding residues include aspartate 255, serine 258, and aspartate 263.

Belongs to the peroxidase family. Classical plant (class III) peroxidase subfamily. Heme b serves as cofactor. Requires Ca(2+) as cofactor.

It localises to the secreted. It carries out the reaction 2 a phenolic donor + H2O2 = 2 a phenolic radical donor + 2 H2O. Removal of H(2)O(2), oxidation of toxic reductants, biosynthesis and degradation of lignin, suberization, auxin catabolism, response to environmental stresses such as wounding, pathogen attack and oxidative stress. These functions might be dependent on each isozyme/isoform in each plant tissue. The sequence is that of Peroxidase 15 (PER15) from Arabidopsis thaliana (Mouse-ear cress).